The following is a 1439-amino-acid chain: Histone-lysine N-methyltransferase NSD3 (1439 aa).

A disordered region spans residues 121–151 (PHEILEKPSPPQPPPPPSVPQTVIPKKTGSP). The span at 128–139 (PSPPQPPPPPSV) shows a compositional bias: pro residues. At S150 the chain carries Phosphoserine. The KIKL signature appears at 154–157 (KLKI). The segment at 181-247 (QASEHTKSKH…PREEPVLKEA (67 aa)) is disordered. Residues 187-201 (KSKHESRKEKRKKSN) show a composition bias toward basic residues. The segment covering 202–244 (RHESSRSEERRSHKIPKLEPEGQNRPNERVDTAPEKPREEPVL) has biased composition (basic and acidic residues). Residues K218 and K245 each participate in a glycyl lysine isopeptide (Lys-Gly) (interchain with G-Cter in SUMO2) cross-link. In terms of domain architecture, PWWP 1 spans 270–333 (VGDLVWSKVG…EKRVREYKGH (64 aa)). Disordered regions lie at residues 344 to 367 (AKQA…ERAQ) and 401 to 466 (EASS…PPPV). 2 stretches are compositionally biased toward polar residues: residues 401–413 (EASS…VTSK) and 425–445 (VLNS…QSST). A Glycyl lysine isopeptide (Lys-Gly) (interchain with G-Cter in SUMO2) cross-link involves residue K413. A Phosphoserine modification is found at S457. Glycyl lysine isopeptide (Lys-Gly) (interchain with G-Cter in SUMO2) cross-links involve residues K502 and K532. Residues 540-695 (QDRLIISSPS…VDSSLSRRGV (156 aa)) are disordered. Residues 546 to 568 (SSPSQRSEKPAQSASSPEATSGS) are compositionally biased toward polar residues. Basic and acidic residues predominate over residues 583–595 (TRSESEKSAEVVP). S585, S587, and S590 each carry phosphoserine. K628 participates in a covalent cross-link: Glycyl lysine isopeptide (Lys-Gly) (interchain with G-Cter in SUMO2). Polar residues predominate over residues 637 to 648 (STDVETASCTYR). Phosphoserine is present on S655. Over residues 670 to 691 (DSPSATADADASDAQSVDSSLS) the composition is skewed to low complexity. 3 PHD-type zinc fingers span residues 701–748 (DTVC…CETG), 749–805 (QHPC…CSME), and 862–955 (VGFC…CKAG). At K790 the chain carries N6-acetyllysine. The 66-residue stretch at 960–1025 (YKQIVWVKLG…QGRVFPYVEG (66 aa)) folds into the PWWP 2 domain. Residues 1036-1065 (INKTFKKALEEAAKRFQELKAQRESKEALE) adopt a coiled-coil conformation. The AWS domain maps to 1096–1146 (SEIPRCNCKPGDENPCGLESQCLNRMSQYECHPQVCPAGDRCQNQCFTKRL). The SET domain occupies 1148–1265 (PDAEVIKTER…AGMELTFNYN (118 aa)). Residue K1154 forms a Glycyl lysine isopeptide (Lys-Gly) (interchain with G-Cter in SUMO2) linkage. The 17-residue stretch at 1272–1288 (GRTVCHCGADNCSGFLG) folds into the Post-SET domain. The PHD-type 4; atypical zinc finger occupies 1323–1370 (EDYCFQCGDGGELVMCDKKDCPKAYHLLCLNLTQPPHGKWECPWHRCD).

The protein belongs to the class V-like SAM-binding methyltransferase superfamily. Histone-lysine methyltransferase family. SET2 subfamily. As to quaternary structure, interacts with BRD4. Interacts (via KIKL motif) with BRD3 (via NET domain).

Its subcellular location is the nucleus. It localises to the chromosome. It carries out the reaction L-lysyl(4)-[histone H3] + 2 S-adenosyl-L-methionine = N(6),N(6)-dimethyl-L-lysyl(4)-[histone H3] + 2 S-adenosyl-L-homocysteine + 2 H(+). The enzyme catalyses L-lysyl(27)-[histone H3] + 2 S-adenosyl-L-methionine = N(6),N(6)-dimethyl-L-lysyl(27)-[histone H3] + 2 S-adenosyl-L-homocysteine + 2 H(+). In terms of biological role, histone methyltransferase. Preferentially dimethylates 'Lys-4' and 'Lys-27' of histone H3 forming H3K4me2 and H3K27me2. H3 'Lys-4' methylation represents a specific tag for epigenetic transcriptional activation, while 'Lys-27' is a mark for transcriptional repression. In Mus musculus (Mouse), this protein is Histone-lysine N-methyltransferase NSD3 (Nsd3).